A 174-amino-acid polypeptide reads, in one-letter code: Repair DNA polymerase X (174 aa).

The interval 42 to 51 (REEKMLNDVD) is involved in ssDNA binding. Mg(2+) contacts are provided by Asp-49 and Asp-51. A disulfide bond links Cys-81 and Cys-86. Asp-100 is a Mg(2+) binding site.

It belongs to the DNA polymerase type-X family. Requires Mg(2+) as cofactor.

It localises to the virion. The catalysed reaction is DNA(n) + a 2'-deoxyribonucleoside 5'-triphosphate = DNA(n+1) + diphosphate. Its function is as follows. Error-prone polymerase lacking a proofreading 3'-5' exonuclease which catalyzes the gap-filling reaction during the DNA repair process. Specifically binds intermediates in the single-nucleotide base-excision repair process. Also catalyzes DNA polymerization with low nucleotide-insertion fidelity. Probably acts as a strategic DNA mutase, which gives rise to a rapid emergence of variants. Generates mismatched G-G pairs, in that case, the polymerase first binds the deoxynucleotide followed by mismatch formation. Together with the viral DNA ligase, fills the single nucleotide gaps generated by the AP endonuclease. Binds DNA with high affinity via the helix alphaE. In African swine fever virus (isolate Tick/South Africa/Pretoriuskop Pr4/1996) (ASFV), this protein is Repair DNA polymerase X.